Here is a 37-residue protein sequence, read N- to C-terminus: uncharacterized protein (37 aa).

An N-terminal signal peptide occupies residues 1-23 (MLNFSLCLYPVFILNKLVLRTQS).

The protein belongs to the orthopoxviruses VACWR204.5 protein family.

This is an uncharacterized protein from Vaccinia virus (strain Western Reserve) (VACV).